The primary structure comprises 221 residues: 2,3-bisphosphoglycerate-dependent phosphoglycerate mutase (221 aa).

Residues 8–15 (RHGNSLWN), 21–22 (TG), arginine 60, 87–90 (ERHY), lysine 98, 114–115 (RR), and 174–175 (GN) each bind substrate. Histidine 9 (tele-phosphohistidine intermediate) is an active-site residue. Glutamate 87 serves as the catalytic Proton donor/acceptor. The disordered stretch occupies residues 114–140 (RRGYDTPPPPLHSQADDPRYEEPPPLS).

This sequence belongs to the phosphoglycerate mutase family. BPG-dependent PGAM subfamily.

The enzyme catalyses (2R)-2-phosphoglycerate = (2R)-3-phosphoglycerate. It participates in carbohydrate degradation; glycolysis; pyruvate from D-glyceraldehyde 3-phosphate: step 3/5. Catalyzes the interconversion of 2-phosphoglycerate and 3-phosphoglycerate. The chain is 2,3-bisphosphoglycerate-dependent phosphoglycerate mutase from Tropheryma whipplei (strain TW08/27) (Whipple's bacillus).